A 267-amino-acid chain; its full sequence is 3-methyl-2-oxobutanoate hydroxymethyltransferase (267 aa).

Aspartate 45 and aspartate 84 together coordinate Mg(2+). 3-methyl-2-oxobutanoate contacts are provided by residues 45–46 (DS), aspartate 84, and lysine 113. Glutamate 115 provides a ligand contact to Mg(2+). Glutamate 182 serves as the catalytic Proton acceptor.

This sequence belongs to the PanB family. Homodecamer; pentamer of dimers. It depends on Mg(2+) as a cofactor.

It is found in the cytoplasm. It catalyses the reaction 3-methyl-2-oxobutanoate + (6R)-5,10-methylene-5,6,7,8-tetrahydrofolate + H2O = 2-dehydropantoate + (6S)-5,6,7,8-tetrahydrofolate. It functions in the pathway cofactor biosynthesis; coenzyme A biosynthesis. Its function is as follows. Catalyzes the reversible reaction in which hydroxymethyl group from 5,10-methylenetetrahydrofolate is transferred onto alpha-ketoisovalerate to form ketopantoate. In Saccharolobus islandicus (strain L.S.2.15 / Lassen #1) (Sulfolobus islandicus), this protein is 3-methyl-2-oxobutanoate hydroxymethyltransferase.